A 557-amino-acid polypeptide reads, in one-letter code: Estrogen receptor beta (557 aa).

The interval 1–154 (MMAAASSPEK…SSGGKADLHY (154 aa)) is modulating. 2 NR C4-type zinc fingers span residues 155–175 (CAVC…CEGC) and 191–215 (CPAT…LRKC). Residues 155 to 220 (CAVCHDYASG…RLRKCYEVGM (66 aa)) constitute a DNA-binding region (nuclear receptor). Positions 240-268 (LTRLSSQGKTAEPKGITGPAEGSLNKPEK) are disordered. The region spanning 272-508 (TPEQLIERIL…DLLLEMLDAH (237 aa)) is the NR LBD domain. Positions 513-557 (SCLPHQPPQQDSKDQSEVPAPLHSSAGGPSNTWTPSSARAGGESQ) are disordered. Polar residues predominate over residues 539 to 557 (GGPSNTWTPSSARAGGESQ).

The protein belongs to the nuclear hormone receptor family. NR3 subfamily. Binds DNA as a homodimer. Can form a heterodimer with ER-alpha.

It is found in the nucleus. Functionally, binds estrogens with an affinity similar to that of ER-alpha, and activates expression of reporter genes containing estrogen response elements (ERE) in an estrogen-dependent manner. In Oreochromis niloticus (Nile tilapia), this protein is Estrogen receptor beta (esr2).